The following is a 267-amino-acid chain: Orotidine 5'-phosphate decarboxylase (267 aa).

Substrate contacts are provided by residues D37, 59–61, 91–100, Y217, and R235; these read KTH and DRKFADIGNT. K93 acts as the Proton donor in catalysis.

Belongs to the OMP decarboxylase family.

It catalyses the reaction orotidine 5'-phosphate + H(+) = UMP + CO2. It functions in the pathway pyrimidine metabolism; UMP biosynthesis via de novo pathway; UMP from orotate: step 2/2. This is Orotidine 5'-phosphate decarboxylase (URA3) from Eremothecium gossypii (strain ATCC 10895 / CBS 109.51 / FGSC 9923 / NRRL Y-1056) (Yeast).